Reading from the N-terminus, the 970-residue chain is Protein CLASP-3 (970 aa).

Disordered stretches follow at residues Ser-314–Arg-377 and Asn-651–His-675. The segment covering Gly-344–Asn-355 has biased composition (polar residues). One copy of the HEAT repeat lies at Ile-905–His-943.

It belongs to the CLASP family.

It localises to the cytoplasm. The protein resides in the cytoskeleton. Its function is as follows. Microtubule plus-end tracking protein that promotes the stabilization of dynamic microtubules. This chain is Protein CLASP-3 (cls-3), found in Caenorhabditis briggsae.